The primary structure comprises 241 residues: Methylthioribulose-1-phosphate dehydratase (241 aa).

Cys100 lines the substrate pocket. The Zn(2+) site is built by His117 and His119. Glu146 serves as the catalytic Proton donor/acceptor. Zn(2+) is bound at residue His202.

The protein belongs to the aldolase class II family. MtnB subfamily. Requires Zn(2+) as cofactor.

It is found in the cytoplasm. It catalyses the reaction 5-(methylsulfanyl)-D-ribulose 1-phosphate = 5-methylsulfanyl-2,3-dioxopentyl phosphate + H2O. It participates in amino-acid biosynthesis; L-methionine biosynthesis via salvage pathway; L-methionine from S-methyl-5-thio-alpha-D-ribose 1-phosphate: step 2/6. Catalyzes the dehydration of methylthioribulose-1-phosphate (MTRu-1-P) into 2,3-diketo-5-methylthiopentyl-1-phosphate (DK-MTP-1-P). In Ajellomyces dermatitidis (strain ER-3 / ATCC MYA-2586) (Blastomyces dermatitidis), this protein is Methylthioribulose-1-phosphate dehydratase.